The following is a 117-amino-acid chain: Large ribosomal subunit protein uL18 (117 aa).

It belongs to the universal ribosomal protein uL18 family. As to quaternary structure, part of the 50S ribosomal subunit; part of the 5S rRNA/L5/L18/L25 subcomplex. Contacts the 5S and 23S rRNAs.

Functionally, this is one of the proteins that bind and probably mediate the attachment of the 5S RNA into the large ribosomal subunit, where it forms part of the central protuberance. This chain is Large ribosomal subunit protein uL18, found in Buchnera aphidicola subsp. Acyrthosiphon kondoi (Acyrthosiphon kondoi symbiotic bacterium).